Consider the following 300-residue polypeptide: B1 kinase (300 aa).

Residues 16-282 (WVVGPLIGKG…ITMVNSLTYF (267 aa)) enclose the Protein kinase domain. ATP-binding positions include 22–30 (IGKGGFGSI) and lysine 45. Catalysis depends on aspartate 147, which acts as the Proton acceptor.

It belongs to the protein kinase superfamily. Ser/Thr protein kinase family. Poxviruses subfamily. In terms of assembly, interacts with host JIP1; this interaction increases the amount of MAPK bound to JIP1 and subsequently increases the activity of transcription factors, such as JUN, that respond to these complexes. Interacts with protein OPG198; this interaction inhibits the repressive activity of OPG198 pseudokinase on viral replication factory formation. The cofactor is Mg(2+). Post-translationally, autophosphorylated.

It localises to the virion. The protein localises to the host cytoplasm. The catalysed reaction is L-seryl-[protein] + ATP = O-phospho-L-seryl-[protein] + ADP + H(+). It carries out the reaction L-threonyl-[protein] + ATP = O-phospho-L-threonyl-[protein] + ADP + H(+). Essential serine/threonine-protein kinase that plays different role in the viral life cycle. Phosphorylates the host small ribosomal protein RACK1 thereby customizing the ribosomes to a state optimal for viral mRNAs (which contain poly-A leaders) but not for host mRNAs. Facilitates viral DNA replication by inhibiting host BANF1, a cellular host defense responsive to foreign DNA. Phosphorylates host BANF1 on serine and threonine residues; this leads to BANF1 relocalization to the cytoplasm, loss of dimerization and impaired DNA binding activity. Indeed, BANF1 activity depends on its DNA-binding property which is blocked by VPK1-mediated phosphorylation. Required for viral intermediate genes expression, probably by inhibiting host BANF1. Modulates cellular responses via host JUN by two different mechanisms, either by direct phosphorylation or by modulation of upstream JIP1-MAPK complexes. Seems to participate in the accumulation/processing of late proteins and thus in virion maturation. In addition, inhibits B12 repressive activity on viral DNA replication via a phosphorylation-dependent mechanism. The polypeptide is B1 kinase (OPG187) (Homo sapiens (Human)).